The chain runs to 419 residues: Capsule polysaccharide modification protein LipB (419 aa).

The protein resides in the cell inner membrane. Functionally, involved in the phospholipid modification of the capsular polysaccharide, a strong requirement for its translocation to the cell surface. The sequence is that of Capsule polysaccharide modification protein LipB (lipB) from Neisseria meningitidis serogroup B (strain ATCC BAA-335 / MC58).